Consider the following 427-residue polypeptide: MSAIVDIIGREILDSRGNPTVECDVLLESGTMGRAAVPSGASTGSREAIELRDGEAGRYNGKGVLKAVEHINTEISEAIMGLDASEQAFLDKTLLELDGTDNKSRLGANAMLAVSMAVAKAAAEEAGLPLYRYFGGSGAMQLPVPMMNIVNGGAHANNSLDIQEFMIVPVSQPTFREALRCGAEVFHALKKILSDRGMSTAVGDEGGFAPNFGSNDECLSTILQAIEKAGYRAGEDVLLALDCAASEFYHDGKYQLAGEGLQLSSAEFTDYLSTLADKFPIVSIEDGMHESDWDGWKLLTDRLGKKVQLVGDDLFVTNTRILKEGIEKGIANSILIKINQIGTLTETFAAIEMAKRASYTAVISHRSGETEDSTIADIAVGLNAGQIKTGSLSRSDRISKYNQLLRIEEDLGDIASYPGKSAFYNLR.

Glutamine 163 lines the (2R)-2-phosphoglycerate pocket. Glutamate 205 (proton donor) is an active-site residue. Mg(2+) is bound by residues aspartate 242, glutamate 285, and aspartate 312. Residues lysine 337, arginine 366, serine 367, and lysine 388 each contribute to the (2R)-2-phosphoglycerate site. The active-site Proton acceptor is lysine 337.

It belongs to the enolase family. The cofactor is Mg(2+).

Its subcellular location is the cytoplasm. The protein resides in the secreted. It localises to the cell surface. The catalysed reaction is (2R)-2-phosphoglycerate = phosphoenolpyruvate + H2O. The protein operates within carbohydrate degradation; glycolysis; pyruvate from D-glyceraldehyde 3-phosphate: step 4/5. Its function is as follows. Catalyzes the reversible conversion of 2-phosphoglycerate (2-PG) into phosphoenolpyruvate (PEP). It is essential for the degradation of carbohydrates via glycolysis. The chain is Enolase from Burkholderia multivorans (strain ATCC 17616 / 249).